The following is a 553-amino-acid chain: Pseudouridylate synthase RPUSD2 (553 aa).

Residues 76–135 (AVGKQVPESGDQAQGGEGQLPSNGEQTPAPVADSGKRKKRRGATGERVVPPPKKRRTGVS) are disordered. Asp287 is an active-site residue. Thr490 is subject to Phosphothreonine.

It belongs to the pseudouridine synthase RluA family.

It catalyses the reaction a uridine in mRNA = a pseudouridine in mRNA. Its function is as follows. Pseudouridine synthase that catalyzes pseudouridylation of mRNAs. The sequence is that of Pseudouridylate synthase RPUSD2 from Mus musculus (Mouse).